The following is a 49-amino-acid chain: MSLVLCFLLMSLFFMYSFVLSRLWRKKIAIRLLLYIQDNVTLIVFLNKK.

The N-terminal stretch at M1–S21 is a signal peptide.

This chain is Protein YlcJ, found in Escherichia coli (strain K12).